We begin with the raw amino-acid sequence, 141 residues long: Putative pre-16S rRNA nuclease (141 aa).

Belongs to the YqgF nuclease family.

It localises to the cytoplasm. Functionally, could be a nuclease involved in processing of the 5'-end of pre-16S rRNA. This is Putative pre-16S rRNA nuclease from Coxiella burnetii (strain CbuK_Q154) (Coxiella burnetii (strain Q154)).